Reading from the N-terminus, the 93-residue chain is MEIKILNKTDTEIQVEIKGESHTMMNALKSCLLEDKAVKVATYDIEFPGISDPVLYVRTDKSEDPIDAIKVAAKKLADECDDFLKIFGKKAKA.

This sequence belongs to the archaeal Rpo11/eukaryotic RPB11/RPC19 RNA polymerase subunit family. Part of the RNA polymerase complex.

It is found in the cytoplasm. The catalysed reaction is RNA(n) + a ribonucleoside 5'-triphosphate = RNA(n+1) + diphosphate. Its function is as follows. DNA-dependent RNA polymerase (RNAP) catalyzes the transcription of DNA into RNA using the four ribonucleoside triphosphates as substrates. The polypeptide is DNA-directed RNA polymerase subunit Rpo11 (Methanocella arvoryzae (strain DSM 22066 / NBRC 105507 / MRE50)).